A 451-amino-acid polypeptide reads, in one-letter code: Tubulin beta-4 chain (451 aa).

The GTP site is built by Q11, E69, S138, G142, T143, G144, N204, and N226. E69 provides a ligand contact to Mg(2+). Over residues 417-427 the composition is skewed to polar residues; the sequence is DLVSEYQQYQD. A disordered region spans residues 417-451; it reads DLVSEYQQYQDATAEEEGEYDEDDGGYGDEDDGMM. Residues 429–451 are compositionally biased toward acidic residues; the sequence is TAEEEGEYDEDDGGYGDEDDGMM.

It belongs to the tubulin family. Dimer of alpha and beta chains. A typical microtubule is a hollow water-filled tube with an outer diameter of 25 nm and an inner diameter of 15 nM. Alpha-beta heterodimers associate head-to-tail to form protofilaments running lengthwise along the microtubule wall with the beta-tubulin subunit facing the microtubule plus end conferring a structural polarity. Microtubules usually have 13 protofilaments but different protofilament numbers can be found in some organisms and specialized cells. Mg(2+) is required as a cofactor.

It localises to the cytoplasm. Its subcellular location is the cytoskeleton. Its function is as follows. Tubulin is the major constituent of microtubules, a cylinder consisting of laterally associated linear protofilaments composed of alpha- and beta-tubulin heterodimers. Microtubules grow by the addition of GTP-tubulin dimers to the microtubule end, where a stabilizing cap forms. Below the cap, tubulin dimers are in GDP-bound state, owing to GTPase activity of alpha-tubulin. This chain is Tubulin beta-4 chain (TUBB4), found in Oomycete-like sp. (strain MacKay2000).